The primary structure comprises 194 residues: Small ribosomal subunit protein uS5 (194 aa).

The 64-residue stretch at 26–89 folds into the S5 DRBM domain; that stretch reads LEEKVVEIRR…ADAKKRIIKV (64 aa).

Belongs to the universal ribosomal protein uS5 family. As to quaternary structure, part of the 30S ribosomal subunit. Contacts proteins S4 and S8.

Its function is as follows. With S4 and S12 plays an important role in translational accuracy. Located at the back of the 30S subunit body where it stabilizes the conformation of the head with respect to the body. The sequence is that of Small ribosomal subunit protein uS5 from Sulfurihydrogenibium sp. (strain YO3AOP1).